A 734-amino-acid chain; its full sequence is Methylcrotonoyl-CoA carboxylase subunit alpha, mitochondrial (734 aa).

The transit peptide at 1–25 (MSMMTVWALRRNVRRKNHSMLVRYI) directs the protein to the mitochondrion. Residues 37–484 (CIEKILVANR…ETHFIEHHKS (448 aa)) enclose the Biotin carboxylation domain. ATP-binding residues include lysine 152, glutamate 236, and histidine 271. One can recognise an ATP-grasp domain in the interval 156-354 (KRIMGAAGVP…LVEWQIRVAN (199 aa)). The Mn(2+) site is built by glutamate 311, glutamate 325, and asparagine 327. Arginine 329 is an active-site residue. Serine 645 is subject to Phosphoserine. Positions 645–666 (SEDEEGVQHRTSSETSSHPPGT) are disordered. The Biotinyl-binding domain occupies 657–733 (SETSSHPPGT…SDGSALFRIK (77 aa)). Residue lysine 699 is modified to N6-biotinyllysine.

Probably a heterodimer composed of biotin-containing alpha subunits and beta subunits. Requires biotin as cofactor. The cofactor is Mn(2+). In terms of tissue distribution, in roots, cotyledons, leaves, flowers, ovaries, siliques and embryos.

The protein resides in the mitochondrion matrix. The enzyme catalyses 3-methylbut-2-enoyl-CoA + hydrogencarbonate + ATP = 3-methyl-(2E)-glutaconyl-CoA + ADP + phosphate + H(+). The protein operates within amino-acid degradation; L-leucine degradation; (S)-3-hydroxy-3-methylglutaryl-CoA from 3-isovaleryl-CoA: step 2/3. Its function is as follows. Biotin-attachment subunit of the 3-methylcrotonyl-CoA carboxylase, an enzyme that catalyzes the conversion of 3-methylcrotonyl-CoA to 3-methylglutaconyl-CoA, a critical step for leucine and isovaleric acid catabolism. The chain is Methylcrotonoyl-CoA carboxylase subunit alpha, mitochondrial (MCCA) from Arabidopsis thaliana (Mouse-ear cress).